We begin with the raw amino-acid sequence, 327 residues long: S-adenosylmethionine/S-adenosylhomocysteine transporter (327 aa).

The next 10 helical transmembrane spans lie at 22 to 42 (CDMAIFLIFLNAFIWSSSFAL), 53 to 73 (LFVTGSRMVLAGVVLFGLLLC), 85 to 105 (IMPIVLLSVIGFYLTNVLEFI), 114 to 134 (TACFIYGFSPFTAAFCSYVQL), 143 to 163 (LGGLSLGLVSYLVYLLFGGSE), 165 to 185 (VAEWGWQLGLPELLLIAATCL), 202 to 222 (SLSMTAINAYAMVIAGVLSLI), 240 to 260 (LFLQAIGALVIFSNLICYNLF), 271 to 291 (FLSFCNLVMPLFASFFGWLLL), and 294 to 314 (SFPPGLLFAVGFMVLGCRLIY). The region spanning 34–157 (FIWSSSFALS…LGLVSYLVYL (124 aa)) is the EamA 1 domain. Residues 189–313 (GWTLLRKLGR…GFMVLGCRLI (125 aa)) form the EamA 2 domain.

Belongs to the drug/metabolite transporter (DMT) superfamily. 10 TMS drug/metabolite exporter (DME) (TC 2.A.7.3) family.

It is found in the cell membrane. In terms of biological role, transports S-adenosylmethionine (SAM) and S-adenosylhomocysteine (SAH). Allows bacteria to acquire SAM from the eukaryotic host cell and to likely remove the toxic by-product SAH. This is S-adenosylmethionine/S-adenosylhomocysteine transporter from Chlamydia trachomatis serovar D (strain ATCC VR-885 / DSM 19411 / UW-3/Cx).